A 558-amino-acid chain; its full sequence is Membrane protein insertase YidC (558 aa).

The next 5 membrane-spanning stretches (helical) occupy residues 3–23 (IKRTVLWVIFFMSAVMLFDNW), 364–384 (FVGNWGWAIVLLTLLIKAVFF), 438–458 (LPVVIQIPVFISLYWVLLASV), 477–497 (PYFILPVLMAVSMFVQTKLNP), and 508–528 (MMFMPIAFSVMFFFFPAGLVL).

This sequence belongs to the OXA1/ALB3/YidC family. Type 1 subfamily. As to quaternary structure, interacts with the Sec translocase complex via SecD. Specifically interacts with transmembrane segments of nascent integral membrane proteins during membrane integration.

The protein localises to the cell inner membrane. Functionally, required for the insertion and/or proper folding and/or complex formation of integral membrane proteins into the membrane. Involved in integration of membrane proteins that insert both dependently and independently of the Sec translocase complex, as well as at least some lipoproteins. Aids folding of multispanning membrane proteins. This Burkholderia pseudomallei (strain K96243) protein is Membrane protein insertase YidC.